The chain runs to 1485 residues: Glutamate receptor ionotropic, NMDA 2B (1485 aa).

The signal sequence occupies residues 1 to 26; the sequence is MKPRAECCSPKFWLVLAVLAVSGSRA. At 27 to 557 the chain is on the extracellular side; the sequence is RSQKSPPSIG…SAFLEPFSAD (531 aa). N74 is a glycosylation site (N-linked (GlcNAc...) asparagine). A disulfide bond links C86 and C321. Zn(2+)-binding residues include H127 and E284. 4 N-linked (GlcNAc...) asparagine glycosylation sites follow: N341, N348, N444, and N491. 2 cysteine pairs are disulfide-bonded: C429–C456 and C436–C457. L-glutamate contacts are provided by T514 and R519. An N-linked (GlcNAc...) asparagine glycan is attached at N542. Residues 558–576 form a helical membrane-spanning segment; sequence VWVMMFVMLLIVSAVAVFV. Topologically, residues 577-603 are cytoplasmic; it reads FEYFSPVGYNRCLADGREPGGPSFTIG. The discontinuously helical intramembrane region spans 604 to 623; it reads KAIWLLWGLVFNNSVPVQNP. The interval 604–623 is pore-forming; it reads KAIWLLWGLVFNNSVPVQNP. At 624-630 the chain is on the cytoplasmic side; that stretch reads KGTTSKI. Residues 631–646 form a helical membrane-spanning segment; sequence MVSVWAFFAVIFLASY. Residues 647–817 lie on the Extracellular side of the membrane; the sequence is TANLAAFMIQ…VMSSQLDIDN (171 aa). An N-linked (GlcNAc...) asparagine glycan is attached at N688. Residues 690–691 and D732 each bind L-glutamate; that span reads ST. Residues C746 and C801 are joined by a disulfide bond. The helical transmembrane segment at 818-837 threads the bilayer; it reads MAGVFYMLGAAMALSLITFI. The Cytoplasmic portion of the chain corresponds to 838–1485; sequence CEHLFYWQFR…EKLSSIESDV (648 aa). S882, S886, S917, and S920 each carry phosphoserine. Phosphotyrosine is present on residues Y962 and Y1039. 3 positions are modified to phosphoserine: S1058, S1061, and S1064. Residues 1074-1097 form a disordered region; it reads EGNAAKRRKQQYKDSLKKRPASAK. 2 positions are modified to phosphotyrosine: Y1109 and Y1133. Residue S1143 is modified to Phosphoserine. Y1155 carries the post-translational modification Phosphotyrosine. Residues 1162–1194 are disordered; the sequence is FKRDSVSGGGPCTNRSHLKHGAGDKHGVVSGVP. Residues S1255 and S1259 each carry the phosphoserine modification. Over residues 1269–1278 the composition is skewed to low complexity; the sequence is PVAVPSNAPS. Positions 1269–1302 are disordered; the sequence is PVAVPSNAPSTKYPQSPTNSKAQKKTRNKLRRQH. The span at 1280–1289 shows a compositional bias: polar residues; that stretch reads KYPQSPTNSK. Residues 1290 to 1301 are compositionally biased toward basic residues; that stretch reads AQKKTRNKLRRQ. The segment at 1292-1304 is interaction with DAPK1; sequence KKTRNKLRRQHSY. S1303 is subject to Phosphoserine; by DAPK1. Y1475 is modified (phosphotyrosine). The PDZ-binding motif lies at 1483–1485; the sequence is SDV.

It belongs to the glutamate-gated ion channel (TC 1.A.10.1) family. NR2B/GRIN2B subfamily. As to quaternary structure, heterotetramer. Forms heterotetrameric channels composed of two GluN1/zeta subunits (GRIN1), and two identical GluN2/epsilon subunits (GRIN2A, GRIN2B, GRIN2C or GRIN2D) or GluN3 subunits (GRIN3A or GRIN3B) (in vitro). Can also form heterotetrameric channels that contain at least two GluN1 subunits and at least two different GluN2 subunits (or a combination of one GluN2 and one GluN3 subunits) (in vitro). In vivo, the subunit composition may depend on the expression levels of the different subunits. Found in a complex with GRIN1, GRIN3A and PPP2CB. Found in a complex with GRIN1 and GRIN3B. Interacts with MAGI3. Interacts with HIP1 and Neto1. Interacts with PDZ domains of PATJ, DLG3 and DLG4. Interacts with DAPK1. Found in a complex with GRIN1 and PRR7. Interacts with PRR7. Interacts with CAMK2A. Interacts with ARC; preventing ARC oligomerization. Interacts with TMEM25. Interacts (via the extreme C-terminus) with FRMPD2 (via the second PDZ domain); the interaction is direct and is likely to promote NMDAR-mediated neural signal transmission. Interacts with FAM81A; the interaction facilitates condensate formation via liquid-liquid phase separation. Phosphorylated on tyrosine residues. Phosphorylation at Ser-1303 by DAPK1 enhances synaptic NMDA receptor channel activity.

It is found in the cell membrane. The protein localises to the postsynaptic cell membrane. It localises to the cell projection. The protein resides in the dendrite. Its subcellular location is the late endosome. It is found in the lysosome. The protein localises to the cytoplasm. It localises to the cytoskeleton. It catalyses the reaction Ca(2+)(in) = Ca(2+)(out). The enzyme catalyses Na(+)(in) = Na(+)(out). The catalysed reaction is K(+)(in) = K(+)(out). In terms of biological role, component of N-methyl-D-aspartate (NMDA) receptors (NMDARs) that function as heterotetrameric, ligand-gated cation channels with high calcium permeability and voltage-dependent block by Mg(2+). Participates in synaptic plasticity for learning and memory formation by contributing to the long-term depression (LTD) of hippocampus membrane currents. Channel activation requires binding of the neurotransmitter L-glutamate to the GluN2 subunit, glycine or D-serine binding to the GluN1 subunit, plus membrane depolarization to eliminate channel inhibition by Mg(2+). NMDARs mediate simultaneously the potasium efflux and the influx of calcium and sodium. Each GluN2 subunit confers differential attributes to channel properties, including activation, deactivation and desensitization kinetics, pH sensitivity, Ca2(+) permeability, and binding to allosteric modulators. In concert with DAPK1 at extrasynaptic sites, acts as a central mediator for stroke damage. Its phosphorylation at Ser-1303 by DAPK1 enhances synaptic NMDA receptor channel activity inducing injurious Ca2+ influx through them, resulting in an irreversible neuronal death. This Canis lupus familiaris (Dog) protein is Glutamate receptor ionotropic, NMDA 2B.